Reading from the N-terminus, the 333-residue chain is Aspartate carbamoyltransferase catalytic subunit (333 aa).

Residues Arg-61 and Thr-62 each coordinate carbamoyl phosphate. Residue Lys-89 coordinates L-aspartate. Residues Arg-111, His-144, and Gln-147 each contribute to the carbamoyl phosphate site. L-aspartate-binding residues include Arg-184 and Arg-248. Residues Gly-289 and Pro-290 each coordinate carbamoyl phosphate.

The protein belongs to the aspartate/ornithine carbamoyltransferase superfamily. ATCase family. Heterododecamer (2C3:3R2) of six catalytic PyrB chains organized as two trimers (C3), and six regulatory PyrI chains organized as three dimers (R2).

It catalyses the reaction carbamoyl phosphate + L-aspartate = N-carbamoyl-L-aspartate + phosphate + H(+). The protein operates within pyrimidine metabolism; UMP biosynthesis via de novo pathway; (S)-dihydroorotate from bicarbonate: step 2/3. Its function is as follows. Catalyzes the condensation of carbamoyl phosphate and aspartate to form carbamoyl aspartate and inorganic phosphate, the committed step in the de novo pyrimidine nucleotide biosynthesis pathway. The polypeptide is Aspartate carbamoyltransferase catalytic subunit (Trichormus variabilis (strain ATCC 29413 / PCC 7937) (Anabaena variabilis)).